The sequence spans 1117 residues: Rhoptry apical surface protein 3 (1117 aa).

Residues 1-12 (MENRPRQQTSGH) show a composition bias toward polar residues. Disordered stretches follow at residues 1 to 27 (MENRPRQQTSGHDCSLGTGDDLSSRPG), 47 to 243 (NHER…SHFT), 258 to 301 (DSER…NKGI), 325 to 398 (SDFK…SLST), 415 to 442 (WNHASPGEGEATEAAGASVSGSSSFLAA), 490 to 572 (AEAV…ESEL), 600 to 619 (RPLLSGPPEEEAGNAEELRS), and 654 to 736 (QDGT…RLQG). Composition is skewed to basic and acidic residues over residues 83 to 100 (DSNHTVEHEVIKEEDSQK), 197 to 209 (TPLRRVGEERHVS), and 275 to 300 (MKPKELDKEAERKQEQLRSSKGDNKG). Low complexity-rich tracts occupy residues 418–442 (ASPGEGEATEAAGASVSGSSSFLAA) and 490–508 (AEAVAAVGQSSSDSSGDSS). Over residues 510–520 (ESDHSGRERSR) the composition is skewed to basic and acidic residues. Polar residues predominate over residues 530-540 (NEITTMRSQRS). The segment covering 546–555 (FSREPERESD) has biased composition (basic and acidic residues). Positions 557-569 (GEMTPTGETSGSE) are enriched in polar residues. Positions 724-734 (DADRKQEEKRL) are enriched in basic and acidic residues. The region spanning 752 to 788 (MLSVDRRLRKLHSDTAVRRMGETEFWKLYFYQVFLLM) is the BSD domain. Polar residues predominate over residues 829-838 (QTSGFTESDT). Disordered stretches follow at residues 829–848 (QTSGFTESDTSSPSPSYGFA), 858–891 (IIPPTGLPDNTEEGEPLSFGGVSLEPKDEEAPEQ), 909–964 (RSPS…GDSP), 1031–1066 (SSSQVNGRVSTSRGTMGEDRHQDQQGDNRLEGPSHL), and 1095–1117 (GTCGDTHQPGLACKGKEVQGARA). Low complexity predominate over residues 839–848 (SSPSPSYGFA). Over residues 909–931 (RSPSLSSSSSGTTSVSARGTGSS) the composition is skewed to low complexity. Residues 1031–1044 (SSSQVNGRVSTSRG) show a composition bias toward polar residues. Composition is skewed to basic and acidic residues over residues 1046 to 1062 (MGEDRHQDQQGDNRLEG) and 1108 to 1117 (KGKEVQGARA).

As to quaternary structure, interacts with RASP2.

It is found in the cytoplasmic vesicle. The protein localises to the secretory vesicle. Its subcellular location is the rhoptry membrane. In Toxoplasma gondii (strain ATCC 50853 / GT1), this protein is Rhoptry apical surface protein 3.